We begin with the raw amino-acid sequence, 159 residues long: Elicitor-responsive protein 1 (159 aa).

Positions 1-112 (MAGSGVLEVH…SLGMEHGTWE (112 aa)) constitute a C2 domain. Residues aspartate 21 and aspartate 30 each coordinate Ca(2+). A Phosphoserine; by CPK modification is found at serine 44. Residues aspartate 81, aspartate 83, serine 86, and aspartate 89 each coordinate Ca(2+).

Ca(2+) is required as a cofactor. Post-translationally, phosphorylated at Ser-44 by CPK18 in a calcium-dependent manner. Isoform 2 is expressed in young vascular tissues and tiller buds.

It localises to the cytoplasm. The protein localises to the cell membrane. Functionally, may play a role in plant defense signaling. Isoform 2 binds to phospholipids in a Ca(2+)-dependent manner in response to pathogen elicitors. The sequence is that of Elicitor-responsive protein 1 (ERG1) from Oryza sativa subsp. japonica (Rice).